The chain runs to 1259 residues: Clustered mitochondria protein homolog (1259 aa).

Positions 1–27 (MSQTNGNMEHSKETPQSQEVEQLTNGN) are enriched in polar residues. The tract at residues 1-38 (MSQTNGNMEHSKETPQSQEVEQLTNGNHPEEQQEEEEN) is disordered. The Clu domain occupies 324-568 (DITRSQESYL…RVTPLDVMWQ (245 aa)). 2 stretches are compositionally biased toward basic and acidic residues: residues 612–628 (AEAEKEKPAESSESKEQ) and 634–647 (TEEKTEESSDQERV). Disordered stretches follow at residues 612–647 (AEAEKEKPAESSESKEQDSEEKTEEKTEESSDQERV) and 881–908 (VVNGANNAAQDEGKKKKKKGADKSPSRA). TPR repeat units follow at residues 982–1015 (AKLYHQLSMLYYQTDEKEAAVELARKAVIVTERT), 1024–1057 (ILAYLNLSLFEHASGNTKTALVYIKHAMDLWKII), and 1066–1099 (ITTMNNAAVMLQHLKQYADSRKWFEASLSVCESL). Disordered stretches follow at residues 1192–1215 (TKVQPQVGQTAPEASGAKNAANAS) and 1229–1259 (EGGDTSSSRSKQKKRAAASNPKLRGSKKSSA).

It belongs to the CLU family. May associate with the eukaryotic translation initiation factor 3 (eIF-3) complex.

The protein resides in the cytoplasm. Functionally, mRNA-binding protein involved in proper cytoplasmic distribution of mitochondria. This Aspergillus clavatus (strain ATCC 1007 / CBS 513.65 / DSM 816 / NCTC 3887 / NRRL 1 / QM 1276 / 107) protein is Clustered mitochondria protein homolog.